The chain runs to 423 residues: Transcription factor bHLH14 (423 aa).

The interval 192-243 (GKTTKHTNQTGSYPKPAVSDHSKSGNQQFGSERKRRRKLETTRVAAATKEKH) is disordered. The 50-residue stretch at 245–294 (PAVLSHVEAEKQRREKLNHRFYALRAIVPKVSRMDKASLLSDAVSYIESL) folds into the bHLH domain. The interval 312–343 (ETDKLDNSSSNTSPSSVEYQVNQKPSKSNRGS) is disordered. Positions 318–327 (NSSSNTSPSS) are enriched in low complexity. Polar residues predominate over residues 328-342 (VEYQVNQKPSKSNRG).

As to quaternary structure, homodimer.

It is found in the nucleus. This is Transcription factor bHLH14 (BHLH14) from Arabidopsis thaliana (Mouse-ear cress).